We begin with the raw amino-acid sequence, 129 residues long: Lysozyme C, milk isozyme (129 aa).

The region spanning 1-129 (KVFSKCELAH…LSEYLASCNL (129 aa)) is the C-type lysozyme domain. Cystine bridges form between Cys6/Cys127, Cys30/Cys115, Cys65/Cys80, and Cys76/Cys94. Catalysis depends on residues Glu35 and Asp53. Lys82, Asp85, Asn87, Asp90, and Asp91 together coordinate Ca(2+).

It belongs to the glycosyl hydrolase 22 family. As to quaternary structure, monomer. It depends on Ca(2+) as a cofactor.

It carries out the reaction Hydrolysis of (1-&gt;4)-beta-linkages between N-acetylmuramic acid and N-acetyl-D-glucosamine residues in a peptidoglycan and between N-acetyl-D-glucosamine residues in chitodextrins.. Lysozymes have primarily a bacteriolytic function; those in tissues and body fluids are associated with the monocyte-macrophage system and enhance the activity of immunoagents. The protein is Lysozyme C, milk isozyme (LYZ) of Equus caballus (Horse).